A 263-amino-acid polypeptide reads, in one-letter code: Small ribosomal subunit protein eS4 (263 aa).

In terms of domain architecture, S4 RNA-binding spans Leu42–Val105.

It belongs to the eukaryotic ribosomal protein eS4 family. In terms of assembly, component of the small ribosomal subunit. Part of the small subunit (SSU) processome, composed of more than 70 proteins and the RNA chaperone small nucleolar RNA (snoRNA) U3.

It localises to the cytoplasm. The protein localises to the nucleus. The protein resides in the nucleolus. Component of the small ribosomal subunit. The ribosome is a large ribonucleoprotein complex responsible for the synthesis of proteins in the cell. Part of the small subunit (SSU) processome, first precursor of the small eukaryotic ribosomal subunit. During the assembly of the SSU processome in the nucleolus, many ribosome biogenesis factors, an RNA chaperone and ribosomal proteins associate with the nascent pre-rRNA and work in concert to generate RNA folding, modifications, rearrangements and cleavage as well as targeted degradation of pre-ribosomal RNA by the RNA exosome. The chain is Small ribosomal subunit protein eS4 (rps4x) from Danio rerio (Zebrafish).